Here is a 454-residue protein sequence, read N- to C-terminus: Transcription factor efuD (454 aa).

One can recognise an HTH TFE/IIEalpha-type domain in the interval 4 to 111 (AKELIRITAR…NYHRAIDSIK (108 aa)). A disordered region spans residues 327–454 (LRTDDDGAMD…DEDELEFEDI (128 aa)). Over residues 353-372 (DQDEEEEEEDDDDDEFEDVD) the composition is skewed to acidic residues. Positions 387-401 (SVSTPATSAQVSSTA) are enriched in polar residues. The span at 423 to 437 (APAAAASSQAAAAES) shows a compositional bias: low complexity. Residues 442–454 (SDEDEDELEFEDI) show a composition bias toward acidic residues.

Belongs to the TFIIE alpha subunit family.

The protein localises to the nucleus. Its function is as follows. Transcription factor; part of the gene cluster that mediates the biosynthesis of enfumafungin, a glycosylated fernene-type triterpenoid with potent antifungal activity, mediated by its interaction with beta-1,3-glucan synthase and the fungal cell wall. Is possibly responsible for the transcription regulation of one or more genes within the gene cluster. The sequence is that of Transcription factor efuD from Hormonema carpetanum.